Reading from the N-terminus, the 232-residue chain is Fibrillarin-like rRNA/tRNA 2'-O-methyltransferase (232 aa).

S-adenosyl-L-methionine is bound by residues 87-88 (TT), 105-106 (EF), 130-131 (DA), and 150-153 (DVAQ).

It belongs to the methyltransferase superfamily. Fibrillarin family. As to quaternary structure, interacts with nop5. Component of box C/D small ribonucleoprotein (sRNP) particles that contain rpl7ae, FlpA and nop5, plus a guide RNA.

Its function is as follows. Involved in pre-rRNA and tRNA processing. Utilizes the methyl donor S-adenosyl-L-methionine to catalyze the site-specific 2'-hydroxyl methylation of ribose moieties in rRNA and tRNA. Site specificity is provided by a guide RNA that base pairs with the substrate. Methylation occurs at a characteristic distance from the sequence involved in base pairing with the guide RNA. This Methanococcus maripaludis (strain C7 / ATCC BAA-1331) protein is Fibrillarin-like rRNA/tRNA 2'-O-methyltransferase.